Here is a 704-residue protein sequence, read N- to C-terminus: Capsule polysaccharide modification protein LipA (704 aa).

It localises to the cell inner membrane. Involved in the phospholipid modification of the capsular polysaccharide, a strong requirement for its translocation to the cell surface. In Neisseria meningitidis serogroup B (strain ATCC BAA-335 / MC58), this protein is Capsule polysaccharide modification protein LipA (lipA).